A 184-amino-acid polypeptide reads, in one-letter code: MMAMNTETLSLIKQSIKTIPNYPKEGILFRDVTSLLENAAAYKATIDLLVEHYRGQGFTKIVGTEARGFLFGAPLALELGVGFVPVRKPGKLPRATISQSYELEYGHDSLEIHTDAINPNDKVLVVDDLLATGGTIEATVKLIRQLGGEVKHAAFVISLPDLGGEARLTALGLELVKLCEFEGE.

The protein belongs to the purine/pyrimidine phosphoribosyltransferase family. As to quaternary structure, homodimer.

It localises to the cytoplasm. The catalysed reaction is AMP + diphosphate = 5-phospho-alpha-D-ribose 1-diphosphate + adenine. It participates in purine metabolism; AMP biosynthesis via salvage pathway; AMP from adenine: step 1/1. Functionally, catalyzes a salvage reaction resulting in the formation of AMP, that is energically less costly than de novo synthesis. In Shewanella baltica (strain OS223), this protein is Adenine phosphoribosyltransferase.